The following is a 166-amino-acid chain: Large ribosomal subunit protein uL10 (166 aa).

It belongs to the universal ribosomal protein uL10 family. As to quaternary structure, part of the ribosomal stalk of the 50S ribosomal subunit. The N-terminus interacts with L11 and the large rRNA to form the base of the stalk. The C-terminus forms an elongated spine to which L12 dimers bind in a sequential fashion forming a multimeric L10(L12)X complex.

In terms of biological role, forms part of the ribosomal stalk, playing a central role in the interaction of the ribosome with GTP-bound translation factors. The protein is Large ribosomal subunit protein uL10 of Pseudomonas syringae pv. tomato (strain ATCC BAA-871 / DC3000).